The chain runs to 196 residues: dTTP/UTP pyrophosphatase (196 aa).

The Proton acceptor role is filled by Asp-73.

This sequence belongs to the Maf family. YhdE subfamily. A divalent metal cation serves as cofactor.

The protein localises to the cytoplasm. It catalyses the reaction dTTP + H2O = dTMP + diphosphate + H(+). It carries out the reaction UTP + H2O = UMP + diphosphate + H(+). Functionally, nucleoside triphosphate pyrophosphatase that hydrolyzes dTTP and UTP. May have a dual role in cell division arrest and in preventing the incorporation of modified nucleotides into cellular nucleic acids. The sequence is that of dTTP/UTP pyrophosphatase from Myxococcus xanthus (strain DK1622).